Consider the following 211-residue polypeptide: Large ribosomal subunit protein eL13 (211 aa).

It belongs to the eukaryotic ribosomal protein eL13 family. As to quaternary structure, component of the 60S large ribosomal subunit (LSU).

The protein localises to the cytoplasm. Its function is as follows. Component of the ribosome, a large ribonucleoprotein complex responsible for the synthesis of proteins in the cell. The small ribosomal subunit (SSU) binds messenger RNAs (mRNAs) and translates the encoded message by selecting cognate aminoacyl-transfer RNA (tRNA) molecules. The large subunit (LSU) contains the ribosomal catalytic site termed the peptidyl transferase center (PTC), which catalyzes the formation of peptide bonds, thereby polymerizing the amino acids delivered by tRNAs into a polypeptide chain. The nascent polypeptides leave the ribosome through a tunnel in the LSU and interact with protein factors that function in enzymatic processing, targeting, and the membrane insertion of nascent chains at the exit of the ribosomal tunnel. As part of the LSU, it is probably required for its formation and the maturation of rRNAs. This chain is Large ribosomal subunit protein eL13 (RPL13), found in Gallus gallus (Chicken).